Here is a 217-residue protein sequence, read N- to C-terminus: Small ribosomal subunit protein uS3 (217 aa).

The region spanning 38-106 (IRKFIDNELK…KVHINVIEIK (69 aa)) is the KH type-2 domain.

The protein belongs to the universal ribosomal protein uS3 family. Part of the 30S ribosomal subunit. Forms a tight complex with proteins S10 and S14.

Its function is as follows. Binds the lower part of the 30S subunit head. Binds mRNA in the 70S ribosome, positioning it for translation. The chain is Small ribosomal subunit protein uS3 from Staphylococcus epidermidis (strain ATCC 35984 / DSM 28319 / BCRC 17069 / CCUG 31568 / BM 3577 / RP62A).